Consider the following 317-residue polypeptide: DNA-directed RNA polymerase subunit alpha (317 aa).

An alpha N-terminal domain (alpha-NTD) region spans residues 1–229; the sequence is MLNEFIYPDK…KHYELLENIF (229 aa). Residues 245 to 317 are alpha C-terminal domain (alpha-CTD); the sequence is AEKLSLSIEE…ELGMNIETQR (73 aa).

The protein belongs to the RNA polymerase alpha chain family. In terms of assembly, homodimer. The RNAP catalytic core consists of 2 alpha, 1 beta, 1 beta' and 1 omega subunit. When a sigma factor is associated with the core the holoenzyme is formed, which can initiate transcription.

The catalysed reaction is RNA(n) + a ribonucleoside 5'-triphosphate = RNA(n+1) + diphosphate. In terms of biological role, DNA-dependent RNA polymerase catalyzes the transcription of DNA into RNA using the four ribonucleoside triphosphates as substrates. This chain is DNA-directed RNA polymerase subunit alpha, found in Aquifex aeolicus (strain VF5).